We begin with the raw amino-acid sequence, 604 residues long: Ras guanine nucleotide exchange factor H (604 aa).

Positions 1-26 (MSNTNINVQSSTPKKSLGSSQYSLAG) are enriched in polar residues. Residues 1–61 (MSNTNINVQS…QENSIDDSGS (61 aa)) are disordered. A compositionally biased stretch (low complexity) spans 27 to 49 (SSSSNLNNINNNNNNNNNNNNNS). Positions 50–61 (TGQENSIDDSGS) are enriched in polar residues. One can recognise a LisH domain in the interval 115–147 (NDTMLLKLIMQYFHEENLTTSLKKIQEETKVQF). In terms of domain architecture, N-terminal Ras-GEF spans 221 to 335 (PDGTIKAATF…AVINLKIENY (115 aa)). Residues 365 to 591 (DEEEIARQLC…EQPQLTLDLS (227 aa)) form the Ras-GEF domain.

As to quaternary structure, component of the Sca1 complex composed of at least gefA, gefH, scaA, phr, and the protein phosphatase 2A subunits pppA and pho2B. Interacts directly with gefA and phr.

It is found in the cell membrane. Functionally, promotes the exchange of Ras-bound GDP by GTP. Component of the Sca1 complex, a regulator of cell motility, chemotaxis and signal relay. The Sca1 complex is recruited to the plasma membrane in a chemoattractant- and F-actin-dependent manner and is enriched at the leading edge of chemotaxing cells where it regulates F-actin dynamics and signal relay by controlling the activation of rasC and the downstream target of rapamycin complex 2 (TORC2)-Akt/protein kinase B (PKB) pathway. In Dictyostelium discoideum (Social amoeba), this protein is Ras guanine nucleotide exchange factor H (gefH).